A 260-amino-acid chain; its full sequence is Ribosomal RNA small subunit methyltransferase A (260 aa).

S-adenosyl-L-methionine-binding residues include L23, G48, E69, D94, and N110.

The protein belongs to the class I-like SAM-binding methyltransferase superfamily. rRNA adenine N(6)-methyltransferase family. RsmA subfamily.

The protein localises to the cytoplasm. It carries out the reaction adenosine(1518)/adenosine(1519) in 16S rRNA + 4 S-adenosyl-L-methionine = N(6)-dimethyladenosine(1518)/N(6)-dimethyladenosine(1519) in 16S rRNA + 4 S-adenosyl-L-homocysteine + 4 H(+). In terms of biological role, specifically dimethylates two adjacent adenosines (A1518 and A1519) in the loop of a conserved hairpin near the 3'-end of 16S rRNA in the 30S particle. May play a critical role in biogenesis of 30S subunits. This Thermotoga petrophila (strain ATCC BAA-488 / DSM 13995 / JCM 10881 / RKU-1) protein is Ribosomal RNA small subunit methyltransferase A.